A 582-amino-acid polypeptide reads, in one-letter code: Formate--tetrahydrofolate ligase (582 aa).

ATP is bound at residue 65-72 (TPLGEGKT).

The protein belongs to the formate--tetrahydrofolate ligase family.

It catalyses the reaction (6S)-5,6,7,8-tetrahydrofolate + formate + ATP = (6R)-10-formyltetrahydrofolate + ADP + phosphate. The protein operates within one-carbon metabolism; tetrahydrofolate interconversion. In Vibrio atlanticus (strain LGP32) (Vibrio splendidus (strain Mel32)), this protein is Formate--tetrahydrofolate ligase.